The chain runs to 156 residues: Transcription elongation factor GreA (156 aa).

Residues 1–32 (MKKVRLTREGYEKLKKELEDLKRKFMYEISER) are a coiled coil.

Belongs to the GreA/GreB family.

Its function is as follows. Necessary for efficient RNA polymerase transcription elongation past template-encoded arresting sites. The arresting sites in DNA have the property of trapping a certain fraction of elongating RNA polymerases that pass through, resulting in locked ternary complexes. Cleavage of the nascent transcript by cleavage factors such as GreA or GreB allows the resumption of elongation from the new 3'terminus. GreA releases sequences of 2 to 3 nucleotides. In Thermotoga maritima (strain ATCC 43589 / DSM 3109 / JCM 10099 / NBRC 100826 / MSB8), this protein is Transcription elongation factor GreA.